A 199-amino-acid polypeptide reads, in one-letter code: Signal peptidase complex subunit 2 (199 aa).

Residues 1-49 (MGKKDEKSQQGEELVKVNKWDGSAVKHALDDAVKTCLLGDRPQLKEQFG) lie on the Cytoplasmic side of the membrane. Residues 50–72 (LVNTRLALCALAVSVAIMAHAWD) form a helical membrane-spanning segment. Over 73–81 (FTHPFPESR) the chain is Lumenal. A helical transmembrane segment spans residues 82-104 (PVLLFSVLAYFALLGILTLHSSF). The Cytoplasmic portion of the chain corresponds to 105–199 (REKGTFAVAL…KKNASSLSSN (95 aa)).

It belongs to the SPCS2 family. As to quaternary structure, component of the signal peptidase complex (SPC) composed of a catalytic subunit twr/SEC11 and three accessory subunits Spase12/SPCS1, Spase25/SPCS2 and Spase22-23/SPCS3. The complex induces a local thinning of the ER membrane which is used to measure the length of the signal peptide (SP) h-region of protein substrates. This ensures the selectivity of the complex towards h-regions shorter than 18-20 amino acids.

It localises to the endoplasmic reticulum membrane. In terms of biological role, component of the signal peptidase complex (SPC) which catalyzes the cleavage of N-terminal signal sequences from nascent proteins as they are translocated into the lumen of the endoplasmic reticulum. Enhances the enzymatic activity of SPC and facilitates the interactions between different components of the translocation site. This is Signal peptidase complex subunit 2 (Spase25) from Drosophila melanogaster (Fruit fly).